The sequence spans 474 residues: Dihydrolipoyl dehydrogenase (474 aa).

Residues 39-47 (EKDAYGGTC), K56, and A118 contribute to the FAD site. A disulfide bridge links C47 with C52. Residues 186 to 190 (GGGYI), E209, and 275 to 278 (AVGR) contribute to the NAD(+) site. The FAD site is built by D318 and A326. H450 (proton acceptor) is an active-site residue.

Belongs to the class-I pyridine nucleotide-disulfide oxidoreductase family. As to quaternary structure, homodimer. The cofactor is FAD.

It is found in the cytoplasm. The catalysed reaction is N(6)-[(R)-dihydrolipoyl]-L-lysyl-[protein] + NAD(+) = N(6)-[(R)-lipoyl]-L-lysyl-[protein] + NADH + H(+). The protein is Dihydrolipoyl dehydrogenase (lpdA) of Halobacterium salinarum (strain ATCC 700922 / JCM 11081 / NRC-1) (Halobacterium halobium).